The sequence spans 209 residues: MTLAKEIARDLLKIKAVYLKPEEPFTWASGIKSPIYTDNRVTLAYPETRTLIEDGFVEKIQAEFPDVEVIAGTATAGIPHGAIIADKMNLPFAYIRSKPKDHGAGNQIEGRVAPGQKMVVIEDLISTGGSVLDAIAAAKREGADVIGAAAIFTYELPKAEKNFNEAGVKLVTLSNYTELITLAEAEGYVSPEGLALLEKFKHDQENWQA.

Residues Arg96, Lys100, His102, and Glu122–Ser130 each bind 5-phospho-alpha-D-ribose 1-diphosphate. Orotate is bound at residue Ser126.

Belongs to the purine/pyrimidine phosphoribosyltransferase family. PyrE subfamily. In terms of assembly, homodimer. Mg(2+) is required as a cofactor.

The enzyme catalyses orotidine 5'-phosphate + diphosphate = orotate + 5-phospho-alpha-D-ribose 1-diphosphate. The protein operates within pyrimidine metabolism; UMP biosynthesis via de novo pathway; UMP from orotate: step 1/2. Functionally, catalyzes the transfer of a ribosyl phosphate group from 5-phosphoribose 1-diphosphate to orotate, leading to the formation of orotidine monophosphate (OMP). The sequence is that of Orotate phosphoribosyltransferase from Streptococcus sanguinis (strain SK36).